The chain runs to 225 residues: Probable methylthioribulose-1-phosphate dehydratase (225 aa).

A substrate-binding site is contributed by cysteine 86. Zn(2+) contacts are provided by histidine 104 and histidine 106. The active-site Proton donor/acceptor is glutamate 127. Zn(2+) is bound at residue histidine 183.

This sequence belongs to the aldolase class II family. MtnB subfamily. Zn(2+) serves as cofactor.

The protein resides in the cytoplasm. It catalyses the reaction 5-(methylsulfanyl)-D-ribulose 1-phosphate = 5-methylsulfanyl-2,3-dioxopentyl phosphate + H2O. The protein operates within amino-acid biosynthesis; L-methionine biosynthesis via salvage pathway; L-methionine from S-methyl-5-thio-alpha-D-ribose 1-phosphate: step 2/6. Catalyzes the dehydration of methylthioribulose-1-phosphate (MTRu-1-P) into 2,3-diketo-5-methylthiopentyl-1-phosphate (DK-MTP-1-P). The sequence is that of Probable methylthioribulose-1-phosphate dehydratase from Leishmania braziliensis.